The following is a 249-amino-acid chain: Probable transcriptional regulatory protein ERGA_CDS_03720 (249 aa).

Residues 1 to 21 (MAGHSQFANIKHRKGAQDAKR) are disordered.

Belongs to the TACO1 family.

It is found in the cytoplasm. The protein is Probable transcriptional regulatory protein ERGA_CDS_03720 of Ehrlichia ruminantium (strain Gardel).